We begin with the raw amino-acid sequence, 385 residues long: Elsinochromes biosynthesis cluster protein HP2 (385 aa).

Positions 1–22 (MVLLYILIMVALIPMYMTVVQD) are cleaved as a signal peptide. 2 helical membrane passes run 94-114 (TVLS…SMFD) and 148-168 (FYGQ…IVLW). N-linked (GlcNAc...) asparagine glycosylation is present at Asn-187. The chain crosses the membrane as a helical span at residues 209–229 (SWTFGQIVPIVLLVSPLVAAF). Residue Asn-248 is glycosylated (N-linked (GlcNAc...) asparagine). Transmembrane regions (helical) follow at residues 309 to 329 (AILF…LPLA) and 344 to 364 (YYAF…AVPF).

It is found in the membrane. Part of the gene cluster that mediates the biosynthesis of elsinochromes, pigments consisting of at least four interconvertible tautomers (A, B, C and D) that have a core phenolic quinone to which various side chains are attached and which play an important role in fungal pathogenesis. The non-reducing polyketide synthase PKS1 was proposed to iteratively catalyze decarboxylation between acetyl-CoA and malonyl-CoA subunits for polyketide chain elongation. The released polyketide undergoes cyclization to form an aromatic ring, and proceeds via serial modification steps to produce the heptaketide back- bone of elsinochrome. As elsinochrome has a symmetrical structure, two identical heptaketides are fused to form a core 1,2-dihydrobenzo-perylene ring structure, which can then be successively modified to produce the various derivatives of elsinochrome. Some of these reactions may be cooperatively carried out, at least in part, by the products of RDT1, OXR1 and PKS1. PRF1, embedded within the elsinochrome cluster possibly functions to stabilize some of the biosynthetic enzymes required for elsinochrome production. As prefoldin is a hexamer containing 2 a and 4 b subunits, additional prefoldin subunits, whose coding genes may not immediately link to the elsinochrome biosynthetic gene cluster, are required to fulfill the chaperone function. In addition, no methyltransferase-coding gene exists within the biosynthetic gene cluster, even though elsinochrome has four methyl groups at positions C3, C7, C8 and C12. Apparently, the identified gene cluster does not contain the entire entourage of genes responsible for elsinochrome biosynthesis. Once elsinochrome is synthesized, it must be exported outside the fungal cells, which is probably accomplished by the ECT1 transporter, to avoid toxicity. The sequence is that of Elsinochromes biosynthesis cluster protein HP2 from Elsinoe fawcettii (Citrus scab fungus).